A 1124-amino-acid chain; its full sequence is Sodium/hydrogen exchanger 11 (1124 aa).

Helical transmembrane passes span 25–45, 52–72, 90–110, 120–140, 179–199, 224–244, 254–274, 305–325, 335–355, 372–392, and 405–425; these read LVEEKHFTTLVCFIVVLGGLL, CEVIVLTILSLSGFVIGHMAY, FSLYSYFSPLIIFMVALDVEF, VLLTGLISFSTASIIIGYVVI, IYIDLIRGESLIICSIASIFF, DILGSIIFGYWCAKIIQCILA, IILCFSMVYMTFYIVEFLGMS, IFSSVYEHLIYAFFGIVIGCG, IPFIFILFTTVNLVRLLTILL, GVVITWSGIKGVFNLLWAPDV, and MFILYVQVISLLTMGINSYVM. Asn-447 and Asn-473 each carry an N-linked (GlcNAc...) asparagine glycan. A run of 4 helical transmembrane segments spans residues 612 to 632, 641 to 661, 674 to 694, and 706 to 726; these read TGQIINLIYIYPMIIHLWPMA, ISINYYFMFLYVLESTLKIII, LEFFILVIGIIDIFCVYFVKL, and VIMGYLRIIRFLPLFKIIVPI. The interval 642–723 is ion transport-like; sequence SINYYFMFLY…IRFLPLFKII (82 aa). 867–999 contacts a nucleoside 3',5'-cyclic phosphate; the sequence is IWLEGKDVLI…EYKIWLKLAL (133 aa).

The protein belongs to the monovalent cation:proton antiporter 1 (CPA1) transporter (TC 2.A.36) family.

The protein resides in the membrane. Its function is as follows. Involved in pH regulation. The chain is Sodium/hydrogen exchanger 11 (SLC9C2) from Homo sapiens (Human).